The primary structure comprises 484 residues: Ribosomal RNA small subunit methyltransferase F (484 aa).

Residues 119 to 125 (ASAPGSK), Glu143, Asp170, and Asp188 contribute to the S-adenosyl-L-methionine site. Cys241 acts as the Nucleophile in catalysis.

The protein belongs to the class I-like SAM-binding methyltransferase superfamily. RsmB/NOP family.

It localises to the cytoplasm. It carries out the reaction cytidine(1407) in 16S rRNA + S-adenosyl-L-methionine = 5-methylcytidine(1407) in 16S rRNA + S-adenosyl-L-homocysteine + H(+). Specifically methylates the cytosine at position 1407 (m5C1407) of 16S rRNA. The polypeptide is Ribosomal RNA small subunit methyltransferase F (Shewanella frigidimarina (strain NCIMB 400)).